We begin with the raw amino-acid sequence, 672 residues long: ABC transporter G family member 21 (672 aa).

Residues 1–35 show a composition bias toward polar residues; the sequence is MMPPNEQESSFPKTPSANRHETSPVQENRFSSPSH. The disordered stretch occupies residues 1 to 59; it reads MMPPNEQESSFPKTPSANRHETSPVQENRFSSPSHVNPCLDDDNDHDGPSHQSRQSSVL. Residues 50 to 59 are compositionally biased toward low complexity; sequence SHQSRQSSVL. Residues 68 to 322 enclose the ABC transporter domain; the sequence is LKFEELTYSI…FGSIGYQPGS (255 aa). 117–124 provides a ligand contact to ATP; the sequence is GPSGSGKT. The ABC transmembrane type-2 domain occupies 411-617; the sequence is MQFSVLLKRG…CYKLLVGVQY (207 aa). The next 6 helical transmembrane spans lie at 429-449, 460-480, 512-532, 543-563, 576-596, and 649-669; these read FSGLRIFMVMSVSLLSGLLWW, VGLLFFFSIFWGFFPLFNAIF, LPMELILPTIFVTITYWMGGL, LMIVLYNVLVAQGVGLALGAI, VLMLVFLLAGGYYIQHIPGFI, and WDVLALAVMLLLYRVLAYLAL.

This sequence belongs to the ABC transporter superfamily. ABCG family. Eye pigment precursor importer (TC 3.A.1.204) subfamily.

It localises to the membrane. The sequence is that of ABC transporter G family member 21 (ABCG21) from Arabidopsis thaliana (Mouse-ear cress).